The primary structure comprises 302 residues: MRIAPSLLSTAIVAALLSAPVVADELTGTLKKIKETGTITLGHRDASIPFSYLGTEPGKPIGYSHDLQLKVVEAVKKELNLPELKVRYNLVTSQTRIPLVQNGTVDIECGSTTNNEERQKQVDFSVGIFEVGTRLLSKKTANIKDFDDLKGKNVVTTAGTTSERLLKAMNADKKMGMNIISAKDHGESFMMLESGRAVAFMMDDALLYGEMAKAKKPDDWVVGGTPQSFEIYGCMVRKGDAAFKKVVDKAITDTYASGEVNKIYDKWFTQPIPPKGLNLNFPMSEELKKLIASPTDKAAEQM.

The N-terminal stretch at Met1–Ala23 is a signal peptide.

It belongs to the bacterial solute-binding protein 3 family.

The protein resides in the periplasm. In terms of biological role, binds L-glutamate and L-aspartate. This Pseudomonas aeruginosa (strain ATCC 15692 / DSM 22644 / CIP 104116 / JCM 14847 / LMG 12228 / 1C / PRS 101 / PAO1) protein is L-glutamate/L-aspartate-binding protein.